The following is a 221-amino-acid chain: MEYLTHSLIAKSEARQIVNKLKAEKLSWQDGKKTAGSHASEKKSNFQLDKNSKLSIKLRDIIVNKIISNPLLKSFTLPSLIHGVMFTQSLAGHHYGSHIDNPYMPSGRSDLSFTLFLNAPEDYEGGELCIQTINKTEKIKLSAGEMIIYPSTQLHSVAEVKDGERHVCVGWIQSYVQNNEDRNFLFGLDAGAKGLLAKHGRSDELDLIFQAYSNILRRLGD.

A Fe2OG dioxygenase domain is found at 80 to 174 (LIHGVMFTQS…RHVCVGWIQS (95 aa)). Fe cation-binding residues include H98, D100, and H155. R165 is a 2-oxoglutarate binding site.

Requires Fe(2+) as cofactor. L-ascorbate serves as cofactor.

The chain is PKHD-type hydroxylase PMN2A_0775 from Prochlorococcus marinus (strain NATL2A).